The following is a 662-amino-acid chain: UPF0313 protein CPE1196 (662 aa).

The region spanning 296–567 (AIEEVKFSLV…AMQRALLQFK (272 aa)) is the Radical SAM core domain. Residues C310, C314, and C317 each coordinate [4Fe-4S] cluster. Residues 597 to 662 (RDKNSFGKGN…QRGSKGKKRR (66 aa)) form a disordered region. The segment covering 618-632 (NRNENSGRRESEDKK) has biased composition (basic and acidic residues). Basic residues predominate over residues 633 to 644 (RSSHSKKQRGNK).

The protein belongs to the UPF0313 family. Requires [4Fe-4S] cluster as cofactor.

In Clostridium perfringens (strain 13 / Type A), this protein is UPF0313 protein CPE1196.